We begin with the raw amino-acid sequence, 313 residues long: tRNA dimethylallyltransferase (313 aa).

9–16 is a binding site for ATP; that stretch reads GPTASGKT. 11–16 contributes to the substrate binding site; the sequence is TASGKT. The interval 34 to 37 is interaction with substrate tRNA; it reads DSMQ.

The protein belongs to the IPP transferase family. As to quaternary structure, monomer. Requires Mg(2+) as cofactor.

The enzyme catalyses adenosine(37) in tRNA + dimethylallyl diphosphate = N(6)-dimethylallyladenosine(37) in tRNA + diphosphate. Catalyzes the transfer of a dimethylallyl group onto the adenine at position 37 in tRNAs that read codons beginning with uridine, leading to the formation of N6-(dimethylallyl)adenosine (i(6)A). In Acetivibrio thermocellus (strain ATCC 27405 / DSM 1237 / JCM 9322 / NBRC 103400 / NCIMB 10682 / NRRL B-4536 / VPI 7372) (Clostridium thermocellum), this protein is tRNA dimethylallyltransferase.